The sequence spans 137 residues: ATP synthase epsilon chain (137 aa).

Belongs to the ATPase epsilon chain family. As to quaternary structure, F-type ATPases have 2 components, CF(1) - the catalytic core - and CF(0) - the membrane proton channel. CF(1) has five subunits: alpha(3), beta(3), gamma(1), delta(1), epsilon(1). CF(0) has three main subunits: a, b and c.

The protein localises to the cell membrane. Functionally, produces ATP from ADP in the presence of a proton gradient across the membrane. This is ATP synthase epsilon chain from Mycoplasmopsis synoviae (strain 53) (Mycoplasma synoviae).